Reading from the N-terminus, the 591-residue chain is Max-binding protein MNT (591 aa).

S2 is subject to N-acetylserine. Disordered stretches follow at residues 17 to 122 and 182 to 223; these read AQQQ…APRQ and PGVQ…GIGT. The segment covering 22–44 has biased composition (basic and acidic residues); that stretch reads RAREEQERLRLEREREREQEQKR. 2 stretches are compositionally biased toward pro residues: residues 63-84 and 102-120; these read EAPP…PLAT and SLPP…PLAP. Basic and acidic residues predominate over residues 205–216; that stretch reads PAEEAKSSEQKK. The 52-residue stretch at 222 to 273 folds into the bHLH domain; sequence GTREVHNKLEKNRRAHLKECFETLKRNIPNVDDKKTSNLSVLRTALRYIQSL. Residues 273-301 form a leucine-zipper region; sequence LKRKEKEYEHEMERLAREKIATQQRLAEL. Residues 321–426 form a disordered region; the sequence is TGQPEDDQAS…PPPATPTQTL (106 aa). Acidic residues predominate over residues 336-346; that stretch reads EGEDNVDEEME. Pro residues predominate over residues 374–383; sequence STAPAPLPTH. Low complexity predominate over residues 390–411; sequence PVALSPAHLPVQQQQPPQQKTP. Residues 412-421 show a composition bias toward pro residues; the sequence is LPAPPPPPAT.

Efficient DNA binding requires dimerization with another bHLH protein. Binds DNA as a homodimer or a heterodimer with MAX.

The protein localises to the nucleus. Functionally, binds DNA as a heterodimer with MAX and represses transcription. Binds to the canonical E box sequence 5'-CACGTG-3' and, with higher affinity, to 5'-CACGCG-3'. The protein is Max-binding protein MNT (Mnt) of Mus musculus (Mouse).